A 121-amino-acid chain; its full sequence is Fumarate reductase subunit D (121 aa).

3 helical membrane-spanning segments follow: residues 22–42 (GVWF…LLPL), 57–77 (AFVS…LPMW), and 100–120 (YACY…VIQL).

The protein belongs to the FrdD family. Part of an enzyme complex containing four subunits: a flavoprotein (FrdA), an iron-sulfur protein (FrdB), and two hydrophobic anchor proteins (FrdC and FrdD).

The protein resides in the cell inner membrane. In terms of biological role, anchors the catalytic components of the fumarate reductase complex to the cell membrane, binds quinones. This Shewanella putrefaciens (strain CN-32 / ATCC BAA-453) protein is Fumarate reductase subunit D.